The chain runs to 153 residues: Large-conductance mechanosensitive channel (153 aa).

Transmembrane regions (helical) follow at residues 16–36 and 88–108; these read VIDL…VKSL and GLFI…FMLV.

It belongs to the MscL family. In terms of assembly, homopentamer.

It localises to the cell inner membrane. Channel that opens in response to stretch forces in the membrane lipid bilayer. May participate in the regulation of osmotic pressure changes within the cell. This chain is Large-conductance mechanosensitive channel, found in Chromobacterium violaceum (strain ATCC 12472 / DSM 30191 / JCM 1249 / CCUG 213 / NBRC 12614 / NCIMB 9131 / NCTC 9757 / MK).